Reading from the N-terminus, the 487-residue chain is Protein DETOXIFICATION 11 (487 aa).

A run of 12 helical transmembrane segments spans residues 35–55, 73–93, 122–142, 151–171, 184–204, 211–231, 264–284, 293–313, 330–350, 377–397, 412–432, and 435–455; these read LICF…LQII, FAIS…SCAL, LVCL…VILG, AGRF…LQPL, LLIT…LLVY, IGGA…LGSF, AAML…SGLL, VLSV…AIAA, AAHI…LMVG, MAPL…LSGV, FGAF…WVHL, and VGLW…LALV.

The protein belongs to the multi antimicrobial extrusion (MATE) (TC 2.A.66.1) family.

Its subcellular location is the membrane. In Arabidopsis thaliana (Mouse-ear cress), this protein is Protein DETOXIFICATION 11.